We begin with the raw amino-acid sequence, 138 residues long: Fusaristatin A biosynthesis cluster protein FGSG_08206 (138 aa).

Residues 33–130 (VHRVTMFKMP…TIDGMMTVFF (98 aa)) form the Stress-response A/B barrel domain.

Its pathway is secondary metabolite biosynthesis. Functionally, part of the gene cluster that mediates the biosynthesis of the lipopeptide fusaristatin A. Fusaristatin A consists of a polyketide chain linked to three amino acid residues glutamine (Gln), dehydroalanine (dehydro-Ala), and beta-aminoisobutyric acid. The biosynthesis starts with formation of a linear polyketide chain by the highly reducing polyketide synthase PKS6. The gene cluster does not contain an acyl-CoA ligase or an acyl-transferase, and it is therefore predicted that the polyketide is transferred directly to the nonribosomal peptide synthetase NRPS7. Modules 1-3 from NRPS7 incorporate dehydro-Ala, Gln, and beta-aminoisobutyric acid in the compound, which is released by cyclization. The beta-aminoisobutyric acid units are most likely not freely available to the NRPS, but can be synthesized from thymine, which requires a dehydrogenase, a monooxygenase, and an aminotransferase. The fusaristatin A cluster contains a cytochrome P450 monooxygenase (FGSG_08207) and an aminotransferase (FGSG_17085), which theoretically can perform two of the enzymatic steps. The enzymes may however also be involved in biosynthesis of dehydroalanine or modification of the polyketide. The dehydro-Ala residue can be a result of cyclization, where serine is dehydrated. The last gene of the cluster encodes a protein with an A/B barrel domain found in variable enzymes, which hampers functional prediction. This Gibberella zeae (strain ATCC MYA-4620 / CBS 123657 / FGSC 9075 / NRRL 31084 / PH-1) (Wheat head blight fungus) protein is Fusaristatin A biosynthesis cluster protein FGSG_08206.